A 207-amino-acid polypeptide reads, in one-letter code: Alpha-1-acid glycoprotein 8 (207 aa).

The signal sequence occupies residues Met1 to Ala18. Residues Asn25, Asn34, Asn76, Asn94, and Asn104 are each glycosylated (N-linked (GlcNAc...) asparagine). Cys91 and Cys184 are oxidised to a cystine.

Belongs to the calycin superfamily. Lipocalin family. In terms of tissue distribution, expressed by the liver and secreted in plasma.

The protein localises to the secreted. Functionally, functions as a transport protein in the blood stream. Binds various ligands in the interior of its beta-barrel domain. Appears to function in modulating the activity of the immune system during the acute-phase reaction. The polypeptide is Alpha-1-acid glycoprotein 8 (Orm8) (Mus caroli (Ryukyu mouse)).